The chain runs to 1196 residues: Cingulin (1196 aa).

A head region spans residues 7-354 (MAEPRGPVDH…LVMTSGSAKG (348 aa)). The ZIM motif lies at 48–62 (ANTYGVAVRVQGIAG). An interaction with TJP1/ZO1 region spans residues 54–67 (AVRVQGIAGQPFVV). The interval 82 to 105 (IKGTNNRGPPGALSSDSELPESTY) is disordered. 9 positions are modified to phosphoserine: Ser95, Ser96, Ser98, Ser135, Ser137, Ser140, Ser155, Ser165, and Ser214. Residues 95 to 105 (SSDSELPESTY) show a composition bias toward polar residues. Residues 183–263 (NKFDSRQGGQ…NQGPLGGFSC (81 aa)) form a disordered region. The segment covering 218–231 (RLPRDTLDEREHQF) has biased composition (basic and acidic residues). Residues 245 to 256 (MGNSKQSSQNQG) show a composition bias toward polar residues. Ser274 is subject to Phosphoserine. A coiled-coil region spans residues 355 to 1150 (LTGQSELSQK…ARIKTLEKDS (796 aa)). At Lys576 the chain carries N6-acetyllysine. The span at 884-897 (AQRQAKEWATEAEK) shows a compositional bias: basic and acidic residues. Disordered regions lie at residues 884 to 906 (AQRQAKEWATEAEKNSGGLSRLQ), 1023 to 1061 (DLKSRLASSEGFQKPSASLSQLESQNQELQERLQAEERE), and 1149 to 1174 (DSWRKASRSAAESAQREGLSSDEEFD). Residues 1038–1050 (SASLSQLESQNQE) show a composition bias toward low complexity. Positions 1051-1061 (LQERLQAEERE) are enriched in basic and acidic residues. The tract at residues 1155–1196 (SRSAAESAQREGLSSDEEFDSVYDPSSIASLLTESNLQTSSC) is tail. Residues Ser1168, Ser1169, and Ser1175 each carry the phosphoserine modification.

Belongs to the cingulin family. In terms of assembly, homodimer. Interacts with TJP1/ZO1 and SPEF1.

It localises to the cell junction. It is found in the tight junction. In terms of biological role, probably plays a role in the formation and regulation of the tight junction (TJ) paracellular permeability barrier. This Canis lupus familiaris (Dog) protein is Cingulin.